Here is a 616-residue protein sequence, read N- to C-terminus: UDP-sugar pyrophosphorylase (616 aa).

The protein belongs to the USP family. Mg(2+) serves as cofactor. Requires Mn(2+) as cofactor.

The catalysed reaction is a monosaccharide 1-phosphate + UTP + H(+) = a UDP-monosaccharide + diphosphate. Functionally, may function as the terminal enzyme of the myo-inositol oxidation (MIO) pathway. May also play a role in the salvage pathway for synthesis of nucleotide sugars. The sequence is that of UDP-sugar pyrophosphorylase (USP) from Oryza sativa subsp. indica (Rice).